We begin with the raw amino-acid sequence, 651 residues long: Acetyl-coenzyme A synthetase (651 aa).

Residues R193–R196, T313, and N337 each bind CoA. ATP-binding positions include G389 to P391, D413 to T418, D502, and R517. S525 is a CoA binding site. R528 provides a ligand contact to ATP. Mg(2+) contacts are provided by V539, H541, and V544. R586 contacts CoA. K611 carries the N6-acetyllysine modification.

The protein belongs to the ATP-dependent AMP-binding enzyme family. Requires Mg(2+) as cofactor. Post-translationally, acetylated. Deacetylation by the SIR2-homolog deacetylase activates the enzyme.

The enzyme catalyses acetate + ATP + CoA = acetyl-CoA + AMP + diphosphate. Its function is as follows. Catalyzes the conversion of acetate into acetyl-CoA (AcCoA), an essential intermediate at the junction of anabolic and catabolic pathways. AcsA undergoes a two-step reaction. In the first half reaction, AcsA combines acetate with ATP to form acetyl-adenylate (AcAMP) intermediate. In the second half reaction, it can then transfer the acetyl group from AcAMP to the sulfhydryl group of CoA, forming the product AcCoA. The sequence is that of Acetyl-coenzyme A synthetase from Shewanella denitrificans (strain OS217 / ATCC BAA-1090 / DSM 15013).